A 211-amino-acid polypeptide reads, in one-letter code: Large ribosomal subunit protein uL4 (211 aa).

2 disordered regions span residues 1–28 and 48–99; these read MAQA…ETEP and TAST…GPRY. Residues 10–28 show a composition bias toward basic and acidic residues; the sequence is RTGRRSEMELKGPRFETEP.

This sequence belongs to the universal ribosomal protein uL4 family. In terms of assembly, part of the 50S ribosomal subunit.

Its function is as follows. One of the primary rRNA binding proteins, this protein initially binds near the 5'-end of the 23S rRNA. It is important during the early stages of 50S assembly. It makes multiple contacts with different domains of the 23S rRNA in the assembled 50S subunit and ribosome. In terms of biological role, forms part of the polypeptide exit tunnel. The protein is Large ribosomal subunit protein uL4 of Rubrobacter xylanophilus (strain DSM 9941 / JCM 11954 / NBRC 16129 / PRD-1).